A 94-amino-acid chain; its full sequence is DNA-directed RNA polymerase subunit Rpo11 (94 aa).

Belongs to the archaeal Rpo11/eukaryotic RPB11/RPC19 RNA polymerase subunit family. In terms of assembly, part of the RNA polymerase complex.

The protein localises to the cytoplasm. It carries out the reaction RNA(n) + a ribonucleoside 5'-triphosphate = RNA(n+1) + diphosphate. Its function is as follows. DNA-dependent RNA polymerase (RNAP) catalyzes the transcription of DNA into RNA using the four ribonucleoside triphosphates as substrates. The sequence is that of DNA-directed RNA polymerase subunit Rpo11 from Thermococcus kodakarensis (strain ATCC BAA-918 / JCM 12380 / KOD1) (Pyrococcus kodakaraensis (strain KOD1)).